The following is a 127-amino-acid chain: Small ribosomal subunit protein bS6 (127 aa).

Residues 104 to 127 (QGAEKGKSSRKEKVAAEAEASEEA) are disordered. A compositionally biased stretch (basic and acidic residues) spans 107 to 119 (EKGKSSRKEKVAA).

This sequence belongs to the bacterial ribosomal protein bS6 family.

Binds together with bS18 to 16S ribosomal RNA. In Coxiella burnetii (strain CbuG_Q212) (Coxiella burnetii (strain Q212)), this protein is Small ribosomal subunit protein bS6.